The primary structure comprises 134 residues: Aspartate 1-decarboxylase (134 aa).

Ser-25 functions as the Schiff-base intermediate with substrate; via pyruvic acid in the catalytic mechanism. Ser-25 is modified (pyruvic acid (Ser)). Thr-57 contacts substrate. Tyr-58 serves as the catalytic Proton donor. Residue 73–75 participates in substrate binding; it reads GAA.

It belongs to the PanD family. Heterooctamer of four alpha and four beta subunits. Pyruvate serves as cofactor. Is synthesized initially as an inactive proenzyme, which is activated by self-cleavage at a specific serine bond to produce a beta-subunit with a hydroxyl group at its C-terminus and an alpha-subunit with a pyruvoyl group at its N-terminus.

It localises to the cytoplasm. The enzyme catalyses L-aspartate + H(+) = beta-alanine + CO2. The protein operates within cofactor biosynthesis; (R)-pantothenate biosynthesis; beta-alanine from L-aspartate: step 1/1. Functionally, catalyzes the pyruvoyl-dependent decarboxylation of aspartate to produce beta-alanine. In Citrifermentans bemidjiense (strain ATCC BAA-1014 / DSM 16622 / JCM 12645 / Bem) (Geobacter bemidjiensis), this protein is Aspartate 1-decarboxylase.